Here is a 407-residue protein sequence, read N- to C-terminus: Bifunctional enzyme IspD/IspF (407 aa).

Residues 1 to 246 (MQPLAEATTI…RQDHVSFPDI (246 aa)) form a 2-C-methyl-D-erythritol 4-phosphate cytidylyltransferase region. The 2-C-methyl-D-erythritol 2,4-cyclodiphosphate synthase stretch occupies residues 247–407 (RTGNGYDVHS…TVIYPGEVPE (161 aa)). A divalent metal cation is bound by residues D253 and H255. 4-CDP-2-C-methyl-D-erythritol 2-phosphate-binding positions include 253–255 (DVH) and 279–280 (HS). An a divalent metal cation-binding site is contributed by H287. 4-CDP-2-C-methyl-D-erythritol 2-phosphate is bound by residues 301–303 (DIG), 377–380 (TTNE), F384, and R387.

The protein in the N-terminal section; belongs to the IspD/TarI cytidylyltransferase family. IspD subfamily. It in the C-terminal section; belongs to the IspF family. A divalent metal cation is required as a cofactor.

It catalyses the reaction 2-C-methyl-D-erythritol 4-phosphate + CTP + H(+) = 4-CDP-2-C-methyl-D-erythritol + diphosphate. It carries out the reaction 4-CDP-2-C-methyl-D-erythritol 2-phosphate = 2-C-methyl-D-erythritol 2,4-cyclic diphosphate + CMP. It participates in isoprenoid biosynthesis; isopentenyl diphosphate biosynthesis via DXP pathway; isopentenyl diphosphate from 1-deoxy-D-xylulose 5-phosphate: step 2/6. It functions in the pathway isoprenoid biosynthesis; isopentenyl diphosphate biosynthesis via DXP pathway; isopentenyl diphosphate from 1-deoxy-D-xylulose 5-phosphate: step 4/6. Its function is as follows. Bifunctional enzyme that catalyzes the formation of 4-diphosphocytidyl-2-C-methyl-D-erythritol from CTP and 2-C-methyl-D-erythritol 4-phosphate (MEP) (IspD), and catalyzes the conversion of 4-diphosphocytidyl-2-C-methyl-D-erythritol 2-phosphate (CDP-ME2P) to 2-C-methyl-D-erythritol 2,4-cyclodiphosphate (ME-CPP) with a corresponding release of cytidine 5-monophosphate (CMP) (IspF). This chain is Bifunctional enzyme IspD/IspF, found in Brucella anthropi (strain ATCC 49188 / DSM 6882 / CCUG 24695 / JCM 21032 / LMG 3331 / NBRC 15819 / NCTC 12168 / Alc 37) (Ochrobactrum anthropi).